We begin with the raw amino-acid sequence, 422 residues long: m7GpppN-mRNA hydrolase (422 aa).

In terms of domain architecture, Nudix hydrolase spans M95–F226. Positions G129–G150 match the Nudix box motif. The Mn(2+) site is built by E144 and E148. A phosphoserine mark is found at S246, S247, S249, S276, and S284. The disordered stretch occupies residues S247 to Q347. The span at S249–S258 shows a compositional bias: low complexity. The span at N303–K312 shows a compositional bias: basic and acidic residues.

The protein belongs to the Nudix hydrolase family. DCP2 subfamily. In terms of assembly, found in a mRNA decay complex with LSM1, LSM3, LSM4, EXOSC2, EXOSC4, EXOSC10, PARN, XRN1, CNOT6, UPF1, UPF2 and UPF3B. Forms a complex with DCP1A, EDC3, DDX6 and EDC4/HEDLS, within this complex directly interacts with EDC4/HEDLS. Interacts with DPC1B, UPF1, UPF2 and UPF3B. Associates with polysomes. Interacts (via N-terminus and C-terminus) with TRIM21 (via N-terminus and C-terminus). Interacts with LIMD1, WTIP and AJUBA. Interacts with DDX17 in an RNA-dependent manner. Interacts with ZC3HAV1. Interacts with APOBEC3G in an RNA-dependent manner. Interacts with ZFP36L1 (via N-terminus). Interacts with NBDY. The cofactor is Mn(2+). It depends on Mg(2+) as a cofactor. As to expression, strongly expressed in brain and testis. Weakly expressed in lung. Not detected in heart, liver, kidney and muscle (at protein level).

The protein localises to the cytoplasm. It is found in the P-body. The protein resides in the nucleus. The catalysed reaction is a 5'-end (N(7)-methyl 5'-triphosphoguanosine)-ribonucleoside in mRNA + H2O = N(7)-methyl-GDP + a 5'-end phospho-ribonucleoside in mRNA + 2 H(+). In terms of biological role, decapping metalloenzyme that catalyzes the cleavage of the cap structure on mRNAs. Removes the 7-methyl guanine cap structure from mRNA molecules, yielding a 5'-phosphorylated mRNA fragment and 7m-GDP. Necessary for the degradation of mRNAs, both in normal mRNA turnover and in nonsense-mediated mRNA decay. Plays a role in replication-dependent histone mRNA degradation. Has higher activity towards mRNAs that lack a poly(A) tail. Has no activity towards a cap structure lacking an RNA moiety. The presence of a N(6)-methyladenosine methylation at the second transcribed position of mRNAs (N(6),2'-O-dimethyladenosine cap; m6A(m)) provides resistance to DCP2-mediated decapping. Blocks autophagy in nutrient-rich conditions by repressing the expression of ATG-related genes through degradation of their transcripts. This chain is m7GpppN-mRNA hydrolase (Dcp2), found in Mus musculus (Mouse).